The sequence spans 477 residues: Aspartyl/glutamyl-tRNA(Asn/Gln) amidotransferase subunit B (477 aa).

This sequence belongs to the GatB/GatE family. GatB subfamily. Heterotrimer of A, B and C subunits.

It carries out the reaction L-glutamyl-tRNA(Gln) + L-glutamine + ATP + H2O = L-glutaminyl-tRNA(Gln) + L-glutamate + ADP + phosphate + H(+). It catalyses the reaction L-aspartyl-tRNA(Asn) + L-glutamine + ATP + H2O = L-asparaginyl-tRNA(Asn) + L-glutamate + ADP + phosphate + 2 H(+). Allows the formation of correctly charged Asn-tRNA(Asn) or Gln-tRNA(Gln) through the transamidation of misacylated Asp-tRNA(Asn) or Glu-tRNA(Gln) in organisms which lack either or both of asparaginyl-tRNA or glutaminyl-tRNA synthetases. The reaction takes place in the presence of glutamine and ATP through an activated phospho-Asp-tRNA(Asn) or phospho-Glu-tRNA(Gln). The sequence is that of Aspartyl/glutamyl-tRNA(Asn/Gln) amidotransferase subunit B from Lactococcus lactis subsp. cremoris (strain SK11).